A 94-amino-acid chain; its full sequence is Acylphosphatase (94 aa).

In terms of domain architecture, Acylphosphatase-like spans 7–94; the sequence is AALVRITGRV…EAPAGFRITR (88 aa). Active-site residues include Arg22 and Asn40.

Belongs to the acylphosphatase family.

The catalysed reaction is an acyl phosphate + H2O = a carboxylate + phosphate + H(+). The polypeptide is Acylphosphatase (acyP) (Sinorhizobium medicae (strain WSM419) (Ensifer medicae)).